The chain runs to 404 residues: Putative aspartate aminotransferase, cytoplasmic 2 (404 aa).

The residue at position 249 (Lys-249) is an N6-(pyridoxal phosphate)lysine.

Belongs to the class-I pyridoxal-phosphate-dependent aminotransferase family. As to quaternary structure, homodimer. The cofactor is pyridoxal 5'-phosphate.

Its subcellular location is the cytoplasm. It carries out the reaction L-aspartate + 2-oxoglutarate = oxaloacetate + L-glutamate. In Mus musculus (Mouse), this protein is Putative aspartate aminotransferase, cytoplasmic 2 (Got1l1).